The primary structure comprises 370 residues: NADH-quinone oxidoreductase subunit D 2 (370 aa).

The protein belongs to the complex I 49 kDa subunit family. In terms of assembly, NDH-1 is composed of 14 different subunits. Subunits NuoB, C, D, E, F, and G constitute the peripheral sector of the complex.

Its subcellular location is the cell membrane. The enzyme catalyses a quinone + NADH + 5 H(+)(in) = a quinol + NAD(+) + 4 H(+)(out). Functionally, NDH-1 shuttles electrons from NADH, via FMN and iron-sulfur (Fe-S) centers, to quinones in the respiratory chain. The immediate electron acceptor for the enzyme in this species is believed to be ubiquinone. Couples the redox reaction to proton translocation (for every two electrons transferred, four hydrogen ions are translocated across the cytoplasmic membrane), and thus conserves the redox energy in a proton gradient. This chain is NADH-quinone oxidoreductase subunit D 2, found in Herpetosiphon aurantiacus (strain ATCC 23779 / DSM 785 / 114-95).